A 75-amino-acid chain; its full sequence is uncharacterized protein (75 aa).

It is found in the plastid. The protein resides in the chloroplast. This is an uncharacterized protein from Calycanthus floridus var. glaucus (Eastern sweetshrub).